Consider the following 345-residue polypeptide: Papain (345 aa).

The first 18 residues, 1 to 18 (MAMIPSISKLLFVAICLF), serve as a signal peptide directing secretion. Residues 19–133 (VYMGLSFGDF…EEVLNDGDVN (115 aa)) constitute a propeptide, activation peptide. Cystine bridges form between Cys155-Cys196, Cys189-Cys228, and Cys286-Cys333. The active site involves Cys158. Cys158 is an E64 binding site. Residue Cys158 participates in leupeptin binding. Active-site residues include His292 and Asn308.

This sequence belongs to the peptidase C1 family.

It carries out the reaction Hydrolysis of proteins with broad specificity for peptide bonds, but preference for an amino acid bearing a large hydrophobic side chain at the P2 position. Does not accept Val in P1'.. With respect to regulation, repressed by the active-site-directed cysteine protease inhibitor E64 (L-trans-epoxysuccinyl-leucylamide-(4-guanido)-butane) produced by Aspergillus japonicus. Inhibited by the inhibitor of cysteine proteases from Trypanosoma brucei (TbICP, rhodesain) and Colocasia esculenta cv. Kaohsiung no. 1 (CeCPI, tarocystatin). Repressed by leupeptin, a peptidic cysteine, serine and threonine protease inhibitor. In terms of biological role, cysteine proteinase with a high level of diversity in substrate specificity, an amino acid bearing a large hydrophobic side chain at the P2 position is preferred. The polypeptide is Papain (Carica papaya (Papaya)).